Reading from the N-terminus, the 257-residue chain is Flap endonuclease Xni (257 aa).

Position 109 (aspartate 109) interacts with Mg(2+). Residues 165-254 (VKPEQLADYW…GFNLQDIRYE (90 aa)) form the 5'-3' exonuclease domain. Leucine 176, proline 185, isoleucine 187, and isoleucine 190 together coordinate K(+). Positions 189-194 (GIGPKA) are interaction with DNA.

Belongs to the Xni family. Mg(2+) is required as a cofactor. The cofactor is K(+).

In terms of biological role, has flap endonuclease activity. During DNA replication, flap endonucleases cleave the 5'-overhanging flap structure that is generated by displacement synthesis when DNA polymerase encounters the 5'-end of a downstream Okazaki fragment. The protein is Flap endonuclease Xni of Vibrio atlanticus (strain LGP32) (Vibrio splendidus (strain Mel32)).